The sequence spans 193 residues: Small ribosomal subunit protein eS7 (193 aa).

This sequence belongs to the eukaryotic ribosomal protein eS7 family.

In Dictyostelium discoideum (Social amoeba), this protein is Small ribosomal subunit protein eS7 (rps7).